Consider the following 437-residue polypeptide: Cytochrome b (437 aa).

Residues 45-65 (WIWGIVLAFTLVLQIVTGIVL) form a helical membrane-spanning segment. Heme b-binding residues include H97 and H111. 9 consecutive transmembrane segments (helical) span residues 100-120 (GASL…YYGS), 129-149 (WIVG…GYVL), 156-176 (FWGA…GPSI), 194-214 (FFSL…IHIW), 248-268 (FVIK…AVVA), 298-318 (FLPF…VILV), 330-350 (FFGV…PWLD), 365-385 (MWFW…AMPT), and 391-411 (WISL…LPLL). Heme b is bound by residues H198 and H212.

The protein belongs to the cytochrome b family. The main subunits of complex b-c1 are: cytochrome b, cytochrome c1 and the Rieske protein. Requires heme b as cofactor.

It localises to the cell membrane. Its function is as follows. Component of the ubiquinol-cytochrome c reductase complex (complex III or cytochrome b-c1 complex), which is a respiratory chain that generates an electrochemical potential coupled to ATP synthesis. The protein is Cytochrome b (petB) of Rhodobacter capsulatus (Rhodopseudomonas capsulata).